Here is a 328-residue protein sequence, read N- to C-terminus: Probable G-protein coupled receptor 82 (328 aa).

Topologically, residues 1–11 (MTNNSTCIQPS) are extracellular. 2 N-linked (GlcNAc...) asparagine glycosylation sites follow: asparagine 3 and asparagine 4. The chain crosses the membrane as a helical span at residues 12–32 (VISTTALPVTYIFLFIIGLFG). Residues 33–55 (NSLAQWVFLTKIGKKTSTHIYLA) are Cytoplasmic-facing. The helical transmembrane segment at 56 to 76 (NLVTANLLVCTAMPFMGIYFL) threads the bilayer. Topologically, residues 77–92 (RGFYWKYQSVQCRLVN) are extracellular. Residues 93 to 115 (FLGTLSMHVSMFVSLLILSWIAI) form a helical membrane-spanning segment. Residues 116-156 (SRYATLMKKESKQEATSCYERMFYGHVLKRFRQPNFARTMC) are Cytoplasmic-facing. The chain crosses the membrane as a helical span at residues 157–177 (IYIWGVVLVIIIPVTLYYSVV). Over 178-197 (EATEEGQSQCYNRQMELGAR) the chain is Extracellular. Residues 198–218 (PSQIAGLIGTTFIGFSFLVVV) form a helical membrane-spanning segment. Over 219–251 (TSYYSLVSHLRRVRTCTSITEKDLTYRSVKRHL) the chain is Cytoplasmic. A helical transmembrane segment spans residues 252–272 (LIIQVLLVVCFLPYSIFKPIF). Over 273–328 (YVLHQREGDCQQLNYLIEAKNILTCLASARSSTDPIIFLLLDKTFKKTLYGLLTKS) the chain is Extracellular.

The protein belongs to the G-protein coupled receptor 1 family.

The protein localises to the cell membrane. In terms of biological role, orphan receptor. This chain is Probable G-protein coupled receptor 82 (Gpr82), found in Mus musculus (Mouse).